The primary structure comprises 427 residues: Trigger factor (427 aa).

The 86-residue stretch at 163-248 folds into the PPIase FKBP-type domain; the sequence is GDTVVIDFVG…IHEVKTKEVP (86 aa).

The protein belongs to the FKBP-type PPIase family. Tig subfamily.

It localises to the cytoplasm. It catalyses the reaction [protein]-peptidylproline (omega=180) = [protein]-peptidylproline (omega=0). In terms of biological role, involved in protein export. Acts as a chaperone by maintaining the newly synthesized protein in an open conformation. Functions as a peptidyl-prolyl cis-trans isomerase. This Streptococcus pyogenes serotype M49 (strain NZ131) protein is Trigger factor.